Here is a 311-residue protein sequence, read N- to C-terminus: Probable acetylxylan esterase A (311 aa).

An N-terminal signal peptide occupies residues 1 to 19; that stretch reads MAPFSFILTVLLYALTCSA. Residue serine 153 is the Charge relay system of the active site. 2 N-linked (GlcNAc...) asparagine glycosylation sites follow: asparagine 197 and asparagine 224.

This sequence belongs to the carbohydrate esterase 1 (CE1) family. AxeA subfamily. As to quaternary structure, monomer.

It is found in the secreted. The catalysed reaction is Deacetylation of xylans and xylo-oligosaccharides.. Its pathway is glycan degradation; xylan degradation. Functionally, acetylxylan esterase involved in the hydrolysis of xylan, a major structural heterogeneous polysaccharide found in plant biomass representing the second most abundant polysaccharide in the biosphere, after cellulose. Degrades acetylated xylans by cleaving acetyl side groups from the hetero-xylan backbone. This chain is Probable acetylxylan esterase A (axeA), found in Aspergillus terreus (strain NIH 2624 / FGSC A1156).